Consider the following 472-residue polypeptide: Tubulin gamma chain (472 aa).

142–148 (AGGTGSG) provides a ligand contact to GTP.

It belongs to the tubulin family.

The protein localises to the cytoplasm. Its subcellular location is the cytoskeleton. The protein resides in the microtubule organizing center. Tubulin is the major constituent of microtubules. The gamma chain is found at microtubule organizing centers (MTOC) such as the spindle poles, suggesting that it is involved in the minus-end nucleation of microtubule assembly. This is Tubulin gamma chain (TUBG) from Anemia phyllitidis (Fern).